A 374-amino-acid chain; its full sequence is Spore germination protein GerLB (374 aa).

10 consecutive transmembrane segments (helical) span residues isoleucine 16–isoleucine 36, aspartate 44–threonine 64, proline 86–glutamate 106, threonine 122–serine 142, leucine 149–isoleucine 169, valine 192–leucine 212, alanine 227–threonine 247, phenylalanine 279–leucine 301, isoleucine 313–asparagine 333, and tyrosine 341–tyrosine 361.

Belongs to the amino acid-polyamine-organocation (APC) superfamily. Spore germination protein (SGP) (TC 2.A.3.9) family.

The protein localises to the membrane. Functionally, contributes to the L-alanine germination response. The sequence is that of Spore germination protein GerLB (gerLB) from Bacillus cereus.